The primary structure comprises 275 residues: Putative phosphoenolpyruvate synthase regulatory protein (275 aa).

153–160 (GVSRTGKT) lines the ADP pocket.

This sequence belongs to the pyruvate, phosphate/water dikinase regulatory protein family. PSRP subfamily.

It carries out the reaction [pyruvate, water dikinase] + ADP = [pyruvate, water dikinase]-phosphate + AMP + H(+). The catalysed reaction is [pyruvate, water dikinase]-phosphate + phosphate + H(+) = [pyruvate, water dikinase] + diphosphate. Functionally, bifunctional serine/threonine kinase and phosphorylase involved in the regulation of the phosphoenolpyruvate synthase (PEPS) by catalyzing its phosphorylation/dephosphorylation. This is Putative phosphoenolpyruvate synthase regulatory protein from Nitrosomonas europaea (strain ATCC 19718 / CIP 103999 / KCTC 2705 / NBRC 14298).